Reading from the N-terminus, the 101-residue chain is Small ribosomal subunit protein uS14 (101 aa).

The protein belongs to the universal ribosomal protein uS14 family. As to quaternary structure, part of the 30S ribosomal subunit. Contacts proteins S3 and S10.

In terms of biological role, binds 16S rRNA, required for the assembly of 30S particles and may also be responsible for determining the conformation of the 16S rRNA at the A site. The protein is Small ribosomal subunit protein uS14 of Xylella fastidiosa (strain 9a5c).